The primary structure comprises 459 residues: Exodeoxyribonuclease 7 large subunit (459 aa).

This sequence belongs to the XseA family. As to quaternary structure, heterooligomer composed of large and small subunits.

Its subcellular location is the cytoplasm. It catalyses the reaction Exonucleolytic cleavage in either 5'- to 3'- or 3'- to 5'-direction to yield nucleoside 5'-phosphates.. Its function is as follows. Bidirectionally degrades single-stranded DNA into large acid-insoluble oligonucleotides, which are then degraded further into small acid-soluble oligonucleotides. The chain is Exodeoxyribonuclease 7 large subunit from Pseudomonas savastanoi pv. phaseolicola (strain 1448A / Race 6) (Pseudomonas syringae pv. phaseolicola (strain 1448A / Race 6)).